Consider the following 90-residue polypeptide: Small ribosomal subunit protein uS15 (90 aa).

Belongs to the universal ribosomal protein uS15 family. In terms of assembly, part of the 30S ribosomal subunit. Forms a bridge to the 50S subunit in the 70S ribosome, contacting the 23S rRNA.

One of the primary rRNA binding proteins, it binds directly to 16S rRNA where it helps nucleate assembly of the platform of the 30S subunit by binding and bridging several RNA helices of the 16S rRNA. Its function is as follows. Forms an intersubunit bridge (bridge B4) with the 23S rRNA of the 50S subunit in the ribosome. This chain is Small ribosomal subunit protein uS15, found in Helicobacter hepaticus (strain ATCC 51449 / 3B1).